Consider the following 100-residue polypeptide: NADH-quinone oxidoreductase subunit K (100 aa).

3 helical membrane passes run 4-24, 28-48, and 60-80; these read LFHG…SLIV, ILFM…ALVV, and IMYI…LALL.

Belongs to the complex I subunit 4L family. In terms of assembly, NDH-1 is composed of 13 different subunits. Subunits NuoA, H, J, K, L, M, N constitute the membrane sector of the complex.

The protein localises to the cell membrane. It carries out the reaction a quinone + NADH + 5 H(+)(in) = a quinol + NAD(+) + 4 H(+)(out). Its function is as follows. NDH-1 shuttles electrons from NADH, via FMN and iron-sulfur (Fe-S) centers, to quinones in the respiratory chain. The immediate electron acceptor for the enzyme in this species is believed to be ubiquinone. Couples the redox reaction to proton translocation (for every two electrons transferred, four hydrogen ions are translocated across the cytoplasmic membrane), and thus conserves the redox energy in a proton gradient. The chain is NADH-quinone oxidoreductase subunit K from Buchnera aphidicola subsp. Schizaphis graminum (strain Sg).